The chain runs to 1704 residues: Type-2 histone deacetylase 2 (1704 aa).

Disordered stretches follow at residues 1-303 (MSTN…SEER), 315-383 (TQGS…TSKK), and 540-634 (QFLQ…IGNS). Over residues 15 to 69 (TTITNESNTDNNNNNNDDNKNNTENTTSPTNNNNTNDNDNNSDNNNNKNNNNNNS) the composition is skewed to low complexity. A compositionally biased stretch (polar residues) spans 70–81 (QVTEEQQVTLED). Residues 97 to 113 (DSAEEDEDEMEDDDEDA) are compositionally biased toward acidic residues. Residues 134–153 (KVQQSTNTHLSQTTPESPTI) are compositionally biased toward polar residues. A compositionally biased stretch (low complexity) spans 165 to 176 (STSTNNTPNTQS). Residues 186-195 (LTSDEEKDLM) show a composition bias toward basic and acidic residues. Residues 196-210 (LSEESDGGVGEDDDS) are compositionally biased toward acidic residues. A compositionally biased stretch (low complexity) spans 222–286 (NQSNQNQNNN…SNNDNNNNNN (65 aa)). The segment covering 315–325 (TQGSSTTTSDP) has biased composition (polar residues). Residues 326–351 (NNQNNQINQINQNNQNNQNNQNNQNN) show a composition bias toward low complexity. Residues 354–369 (GEEEFGEEFEEEEEDM) show a composition bias toward acidic residues. Over residues 372–382 (PKKKTKYKTSK) the composition is skewed to basic residues. 2 stretches are compositionally biased toward low complexity: residues 540–549 (QFLQQQQQQQ) and 561–580 (NSNN…NNNS). Positions 608-620 (YETRKYTKKRNDE) are enriched in basic and acidic residues. D1165 and G1227 together coordinate substrate. The a divalent metal cation site is built by D1256, H1258, and D1350. The disordered stretch occupies residues 1485–1704 (QLERQKQLQQ…TPQNINNSDN (220 aa)). Low complexity predominate over residues 1491-1616 (QLQQQQQQAQ…NNSNNNNNMN (126 aa)). Residues 1649–1669 (LSPNSVNRGNNPSNISMSGAQ) are compositionally biased toward polar residues. Positions 1677-1698 (SPKPSNSPNSPSTSNNNGTPQN) are enriched in low complexity.

It belongs to the histone deacetylase family. HD type 2 subfamily.

The protein resides in the nucleus. Its subcellular location is the cytoplasm. The catalysed reaction is N(6)-acetyl-L-lysyl-[histone] + H2O = L-lysyl-[histone] + acetate. In terms of biological role, responsible for the deacetylation of lysine residues on the N-terminal part of the core histones (H2A, H2B, H3 and H4). Histone deacetylation plays an important role in transcriptional regulation, cell cycle progression and developmental events. Histone deacetylases act via the formation of large multiprotein complexes. The sequence is that of Type-2 histone deacetylase 2 (hdaC) from Dictyostelium discoideum (Social amoeba).